The following is a 225-amino-acid chain: Imidazole glycerol phosphate synthase subunit HisH (225 aa).

Residues 3 to 225 (TIAIVDYGMG…LYRNFVDWQP (223 aa)) form the Glutamine amidotransferase type-1 domain. The active-site Nucleophile is the C82. Residues H205 and E207 contribute to the active site.

Heterodimer of HisH and HisF.

The protein localises to the cytoplasm. It carries out the reaction 5-[(5-phospho-1-deoxy-D-ribulos-1-ylimino)methylamino]-1-(5-phospho-beta-D-ribosyl)imidazole-4-carboxamide + L-glutamine = D-erythro-1-(imidazol-4-yl)glycerol 3-phosphate + 5-amino-1-(5-phospho-beta-D-ribosyl)imidazole-4-carboxamide + L-glutamate + H(+). The enzyme catalyses L-glutamine + H2O = L-glutamate + NH4(+). The protein operates within amino-acid biosynthesis; L-histidine biosynthesis; L-histidine from 5-phospho-alpha-D-ribose 1-diphosphate: step 5/9. IGPS catalyzes the conversion of PRFAR and glutamine to IGP, AICAR and glutamate. The HisH subunit catalyzes the hydrolysis of glutamine to glutamate and ammonia as part of the synthesis of IGP and AICAR. The resulting ammonia molecule is channeled to the active site of HisF. This chain is Imidazole glycerol phosphate synthase subunit HisH, found in Bordetella pertussis (strain Tohama I / ATCC BAA-589 / NCTC 13251).